The chain runs to 1853 residues: Cellulosomal-scaffolding protein A (1853 aa).

The N-terminal stretch at 1–28 (MRKVISMLLVVAMLTTIFAAMIPQTVSA) is a signal peptide. Cohesin domains are found at residues 29 to 182 (ATMT…VPSD) and 183 to 322 (GVVV…VNVG). Linker (Pro/Thr-rich) stretches follow at residues 323 to 363 (NATP…PANT) and 523 to 559 (GGSV…SDDP). Residues 323–364 (NATPTKGATPTNTATPTKSATATPTRPSVPTNTPTNTPANTP) are compositionally biased toward low complexity. Disordered regions lie at residues 323-367 (NATP…PVSG) and 525-559 (SVVP…SDDP). The CBM3 domain occupies 365–523 (VSGNLKVEFY…GVLVWGKEPG (159 aa)). A compositionally biased stretch (low complexity) spans 525 to 555 (SVVPSTQPVTTPPATTKPPATTKPPATTIPP). 7 Cohesin domains span residues 560-704 (NAIK…NVGD), 724-866 (AVRI…VNVG), 889-1031 (AVRI…VNVG), 1054-1196 (AVRI…VNVG), 1219-1361 (AVRI…VNVG), 1384-1526 (AVRI…VNVG), and 1548-1690 (KLTL…VLVT). A Dockerin domain is found at 1785–1852 (IMMWVGDIVK…FGATSSDYDA (68 aa)).

In terms of processing, O-glycosylated on most but not all Thr residues of the linker units. The reducing sugar is galactopyranose.

The protein localises to the secreted. In terms of biological role, acts as a scaffolding protein in the cellulosome. It promotes binding of cellulose to the catalytic domains of the cellulolytic enzymes. This Acetivibrio thermocellus (strain ATCC 27405 / DSM 1237 / JCM 9322 / NBRC 103400 / NCIMB 10682 / NRRL B-4536 / VPI 7372) (Clostridium thermocellum) protein is Cellulosomal-scaffolding protein A (cipA).